We begin with the raw amino-acid sequence, 89 residues long: uncharacterized protein (89 aa).

The next 3 membrane-spanning stretches (helical) occupy residues 5 to 25, 36 to 56, and 67 to 87; these read AYLVLINLCGFWVMGIDKRKA, RLWLIAIVFGALGVWLGMQTF, and YGVPLLLVIEAILIAIYYSPF.

It is found in the cell membrane. This is an uncharacterized protein from Bacillus subtilis (strain 168).